We begin with the raw amino-acid sequence, 139 residues long: HTH-type transcriptional repressor Mb2911 (139 aa).

One can recognise an HTH marR-type domain in the interval 6–138 (DAPLGYLLYR…FKRMLEKLGS (133 aa)).

Homodimer.

Represses expression of the HQNO methyltransferase htm gene by binding to its promoter region. This chain is HTH-type transcriptional repressor Mb2911, found in Mycobacterium bovis (strain ATCC BAA-935 / AF2122/97).